A 70-amino-acid polypeptide reads, in one-letter code: Cytochrome c oxidase subunit 8B, mitochondrial (70 aa).

A mitochondrion-targeting transit peptide spans M1–H24. Residues V25–S35 are Mitochondrial matrix-facing. A helical membrane pass occupies residues P36 to S59. Over H60–A70 the chain is Mitochondrial intermembrane.

It belongs to the cytochrome c oxidase VIII family. As to quaternary structure, component of the cytochrome c oxidase (complex IV, CIV), a multisubunit enzyme composed of 14 subunits. The complex is composed of a catalytic core of 3 subunits MT-CO1, MT-CO2 and MT-CO3, encoded in the mitochondrial DNA, and 11 supernumerary subunits COX4I, COX5A, COX5B, COX6A, COX6B, COX6C, COX7A, COX7B, COX7C, COX8 and NDUFA4, which are encoded in the nuclear genome. The complex exists as a monomer or a dimer and forms supercomplexes (SCs) in the inner mitochondrial membrane with NADH-ubiquinone oxidoreductase (complex I, CI) and ubiquinol-cytochrome c oxidoreductase (cytochrome b-c1 complex, complex III, CIII), resulting in different assemblies (supercomplex SCI(1)III(2)IV(1) and megacomplex MCI(2)III(2)IV(2)).

The protein resides in the mitochondrion inner membrane. The protein operates within energy metabolism; oxidative phosphorylation. In terms of biological role, component of the cytochrome c oxidase, the last enzyme in the mitochondrial electron transport chain which drives oxidative phosphorylation. The respiratory chain contains 3 multisubunit complexes succinate dehydrogenase (complex II, CII), ubiquinol-cytochrome c oxidoreductase (cytochrome b-c1 complex, complex III, CIII) and cytochrome c oxidase (complex IV, CIV), that cooperate to transfer electrons derived from NADH and succinate to molecular oxygen, creating an electrochemical gradient over the inner membrane that drives transmembrane transport and the ATP synthase. Cytochrome c oxidase is the component of the respiratory chain that catalyzes the reduction of oxygen to water. Electrons originating from reduced cytochrome c in the intermembrane space (IMS) are transferred via the dinuclear copper A center (CU(A)) of subunit 2 and heme A of subunit 1 to the active site in subunit 1, a binuclear center (BNC) formed by heme A3 and copper B (CU(B)). The BNC reduces molecular oxygen to 2 water molecules using 4 electrons from cytochrome c in the IMS and 4 protons from the mitochondrial matrix. In Ateles belzebuth (White-bellied spider monkey), this protein is Cytochrome c oxidase subunit 8B, mitochondrial (COX8B).